The primary structure comprises 444 residues: uncharacterized protein (444 aa).

A compositionally biased stretch (basic and acidic residues) spans 1-11; sequence MASSAGRDKLR. The disordered stretch occupies residues 1-35; the sequence is MASSAGRDKLRSRGQRVFAFGSSTPRDLSHMSKVP.

This is an uncharacterized protein from Caenorhabditis elegans.